We begin with the raw amino-acid sequence, 130 residues long: Small ribosomal subunit protein uS11 (130 aa).

It belongs to the universal ribosomal protein uS11 family. Part of the 30S ribosomal subunit. Interacts with proteins S7 and S18. Binds to IF-3.

Located on the platform of the 30S subunit, it bridges several disparate RNA helices of the 16S rRNA. Forms part of the Shine-Dalgarno cleft in the 70S ribosome. The chain is Small ribosomal subunit protein uS11 from Gluconobacter oxydans (strain 621H) (Gluconobacter suboxydans).